A 389-amino-acid polypeptide reads, in one-letter code: Probable tRNA pseudouridine synthase D 1 (389 aa).

Catalysis depends on D63, which acts as the Nucleophile. Positions 135 to 345 (GAPNYYDDQR…KYTKRPIISI (211 aa)) constitute a TRUD domain.

The protein belongs to the pseudouridine synthase TruD family.

It carries out the reaction uridine(13) in tRNA = pseudouridine(13) in tRNA. Could be responsible for synthesis of pseudouridine from uracil-13 in transfer RNAs. This is Probable tRNA pseudouridine synthase D 1 (truD1) from Methanococcus maripaludis (strain DSM 14266 / JCM 13030 / NBRC 101832 / S2 / LL).